Here is a 468-residue protein sequence, read N- to C-terminus: ATP synthase subunit beta (468 aa).

148–155 (GGAGVGKT) serves as a coordination point for ATP.

Belongs to the ATPase alpha/beta chains family. As to quaternary structure, F-type ATPases have 2 components, CF(1) - the catalytic core - and CF(0) - the membrane proton channel. CF(1) has five subunits: alpha(3), beta(3), gamma(1), delta(1), epsilon(1). CF(0) has three main subunits: a(1), b(2) and c(9-12). The alpha and beta chains form an alternating ring which encloses part of the gamma chain. CF(1) is attached to CF(0) by a central stalk formed by the gamma and epsilon chains, while a peripheral stalk is formed by the delta and b chains.

The protein resides in the cell inner membrane. It catalyses the reaction ATP + H2O + 4 H(+)(in) = ADP + phosphate + 5 H(+)(out). Functionally, produces ATP from ADP in the presence of a proton gradient across the membrane. The catalytic sites are hosted primarily by the beta subunits. In Xanthomonas axonopodis pv. citri (strain 306), this protein is ATP synthase subunit beta.